Reading from the N-terminus, the 265-residue chain is Anamorsin homolog (265 aa).

The segment at 1-147 (MDAAKMYGAV…WKIGSSFALK (147 aa)) is N-terminal SAM-like domain. The linker stretch occupies residues 147–176 (KKVVKSSPKVQIDFDSDLIDENSLLSEEDL). Positions 186, 195, 198, and 200 each coordinate [2Fe-2S] cluster. The tract at residues 186–200 (CEIGPTRKACKNCSC) is fe-S binding site A. [4Fe-4S] cluster contacts are provided by Cys-226, Cys-229, Cys-237, and Cys-240. 2 consecutive short sequence motifs (cx2C motif) follow at residues 226-229 (CGSC) and 237-240 (CSTC). The fe-S binding site B stretch occupies residues 226-240 (CGSCGLGDAFRCSTC).

This sequence belongs to the anamorsin family. In terms of assembly, monomer. [2Fe-2S] cluster serves as cofactor. The cofactor is [4Fe-4S] cluster.

It localises to the cytoplasm. The protein resides in the mitochondrion intermembrane space. Component of the cytosolic iron-sulfur (Fe-S) protein assembly (CIA) machinery. Required for the maturation of extramitochondrial Fe-S proteins. Part of an electron transfer chain functioning in an early step of cytosolic Fe-S biogenesis, facilitating the de novo assembly of a [4Fe-4S] cluster on the cytosolic Fe-S scaffold complex. Electrons are transferred from NADPH via a FAD- and FMN-containing diflavin oxidoreductase. Together with the diflavin oxidoreductase, also required for the assembly of the diferric tyrosyl radical cofactor of ribonucleotide reductase (RNR), probably by providing electrons for reduction during radical cofactor maturation in the catalytic small subunit. The polypeptide is Anamorsin homolog (Medicago truncatula (Barrel medic)).